Here is a 445-residue protein sequence, read N- to C-terminus: Anthranilate N-benzoyltransferase protein 1 (445 aa).

Residues H164 and D392 each act as proton acceptor in the active site.

It belongs to the plant acyltransferase family. In terms of processing, N-terminus is blocked.

It catalyses the reaction anthranilate + benzoyl-CoA = N-benzoylanthranilate + CoA. Its pathway is phytoalexin biosynthesis; methoxydianthramide B biosynthesis. Its function is as follows. Catalyzes the formation of N-benzoylanthranilate, in the course of methoxydianthramide B, a phytoalexin. Phytoalexins are produced in response to infection by parasites, and are essential for the expression of disease resistance. The sequence is that of Anthranilate N-benzoyltransferase protein 1 (HCBT1) from Dianthus caryophyllus (Carnation).